We begin with the raw amino-acid sequence, 266 residues long: HTH-type transcriptional regulator MurR (266 aa).

The region spanning 1-77 is the HTH rpiR-type domain; sequence MLYLTKIRNA…MALIGEYSAS (77 aa). The segment at residues 37 to 56 is a DNA-binding region (H-T-H motif); sequence SRQMAKQLGISQSSIVKFAQ. One can recognise an SIS domain in the interval 128–266; the sequence is IIEVISKAPF…LLFVGLVQHQ (139 aa).

In terms of assembly, homotetramer.

It participates in amino-sugar metabolism; N-acetylmuramate degradation [regulation]. Represses the expression of the murPQ operon involved in the uptake and degradation of N-acetylmuramic acid (MurNAc). Binds to two adjacent inverted repeats within the operator region. MurNAc 6-phosphate, the substrate of MurQ, is the specific inducer that weakens binding of MurR to the operator. The chain is HTH-type transcriptional regulator MurR from Shigella flexneri serotype 5b (strain 8401).